The primary structure comprises 260 residues: Ribosomal RNA small subunit methyltransferase A (260 aa).

Leu-23, Gly-48, Glu-69, Asp-94, and Asn-110 together coordinate S-adenosyl-L-methionine.

Belongs to the class I-like SAM-binding methyltransferase superfamily. rRNA adenine N(6)-methyltransferase family. RsmA subfamily.

The protein resides in the cytoplasm. It carries out the reaction adenosine(1518)/adenosine(1519) in 16S rRNA + 4 S-adenosyl-L-methionine = N(6)-dimethyladenosine(1518)/N(6)-dimethyladenosine(1519) in 16S rRNA + 4 S-adenosyl-L-homocysteine + 4 H(+). Specifically dimethylates two adjacent adenosines (A1518 and A1519) in the loop of a conserved hairpin near the 3'-end of 16S rRNA in the 30S particle. May play a critical role in biogenesis of 30S subunits. The sequence is that of Ribosomal RNA small subunit methyltransferase A from Thermotoga petrophila (strain ATCC BAA-488 / DSM 13995 / JCM 10881 / RKU-1).